Consider the following 421-residue polypeptide: Synaptotagmin-15 (421 aa).

The Extracellular segment spans residues 1–4; sequence MAEQ. The helical; Signal-anchor for type III membrane protein transmembrane segment at 5-29 threads the bilayer; sequence LALVIGGTIGGLLLLLLIGASCCLW. At 30 to 421 the chain is on the cytoplasmic side; the sequence is RRFCATLTYE…WHALCRTTEP (392 aa). The interval 47 to 68 is disordered; it reads MATTAASSGQRDRPCQPHARTQ. C2 domains lie at 147–264 and 278–399; these read CLGR…RRVI and EFGD…EHWD.

The protein belongs to the synaptotagmin family. Homodimer.

The protein localises to the cell membrane. Its function is as follows. May be involved in the trafficking and exocytosis of secretory vesicles in non-neuronal tissues. The chain is Synaptotagmin-15 (SYT15) from Homo sapiens (Human).